The following is a 146-amino-acid chain: Anti-sigma F factor (146 aa).

It belongs to the anti-sigma-factor family.

It carries out the reaction L-seryl-[protein] + ATP = O-phospho-L-seryl-[protein] + ADP + H(+). The catalysed reaction is L-threonyl-[protein] + ATP = O-phospho-L-threonyl-[protein] + ADP + H(+). Binds to sigma F and blocks its ability to form an RNA polymerase holoenzyme (E-sigma F). Phosphorylates SpoIIAA on a serine residue. This phosphorylation may enable SpoIIAA to act as an anti-anti-sigma factor that counteracts SpoIIAB and thus releases sigma F from inhibition. The chain is Anti-sigma F factor from Lysinibacillus sphaericus (Bacillus sphaericus).